We begin with the raw amino-acid sequence, 444 residues long: Na(+)/H(+) antiporter NhaA 2 (444 aa).

11 consecutive transmembrane segments (helical) span residues 21–41 (FSGIFLFFCAVSAMIVANSPF), 64–84 (FSIHDWINDVLMSIFFLMVGL), 102–122 (AFPVIGAVGGMIVPGVIYYVL), 131–151 (GFGIPMATDIAFALGVILLLG), 160–180 (VFLVTLAVADDLGAIVVIAVF), 185–205 (EGLHFIYLGVAAGLLILLTGI), 212–232 (HLGVYIGIGILLWFCVHHSGI), 307–327 (ALQPLCAFIIMPLFAFANAGV), 342–362 (LGVILGLVVGKPLGILSLTFL), 377–397 (WSHIFGAGMLAGIGFTMSMFV), and 413–433 (IAILLASSIAGIVGSLYLIIN).

This sequence belongs to the NhaA Na(+)/H(+) (TC 2.A.33) antiporter family.

The protein localises to the cell inner membrane. The catalysed reaction is Na(+)(in) + 2 H(+)(out) = Na(+)(out) + 2 H(+)(in). Functionally, na(+)/H(+) antiporter that extrudes sodium in exchange for external protons. The chain is Na(+)/H(+) antiporter NhaA 2 from Helicobacter hepaticus (strain ATCC 51449 / 3B1).